We begin with the raw amino-acid sequence, 92 residues long: Acylphosphatase (92 aa).

One can recognise an Acylphosphatase-like domain in the interval 5–92 (RAHVVVSGKV…GEFSGFKIAF (88 aa)). Active-site residues include arginine 20 and asparagine 38.

This sequence belongs to the acylphosphatase family.

It catalyses the reaction an acyl phosphate + H2O = a carboxylate + phosphate + H(+). In Pelotomaculum thermopropionicum (strain DSM 13744 / JCM 10971 / SI), this protein is Acylphosphatase (acyP).